The primary structure comprises 153 residues: Large ribosomal subunit protein uL15 (153 aa).

Residues 21–41 (RGIGSGKGKTGGRGIKGQKSR) are disordered. The segment covering 23 to 35 (IGSGKGKTGGRGI) has biased composition (gly residues).

The protein belongs to the universal ribosomal protein uL15 family. In terms of assembly, part of the 50S ribosomal subunit.

Its function is as follows. Binds to the 23S rRNA. This chain is Large ribosomal subunit protein uL15, found in Rickettsia massiliae (strain Mtu5).